The following is a 368-amino-acid chain: Chorismate synthase (368 aa).

NADP(+) contacts are provided by R48 and R54. FMN-binding positions include 125–127 (RSS), 238–239 (NA), G278, 293–297 (KPTSS), and R319.

The protein belongs to the chorismate synthase family. As to quaternary structure, homotetramer. FMNH2 is required as a cofactor.

The enzyme catalyses 5-O-(1-carboxyvinyl)-3-phosphoshikimate = chorismate + phosphate. The protein operates within metabolic intermediate biosynthesis; chorismate biosynthesis; chorismate from D-erythrose 4-phosphate and phosphoenolpyruvate: step 7/7. Catalyzes the anti-1,4-elimination of the C-3 phosphate and the C-6 proR hydrogen from 5-enolpyruvylshikimate-3-phosphate (EPSP) to yield chorismate, which is the branch point compound that serves as the starting substrate for the three terminal pathways of aromatic amino acid biosynthesis. This reaction introduces a second double bond into the aromatic ring system. In Methylibium petroleiphilum (strain ATCC BAA-1232 / LMG 22953 / PM1), this protein is Chorismate synthase.